Consider the following 145-residue polypeptide: Toxin Res (145 aa).

The protein belongs to the MbcT/ParT/Res family. Homodimer. Forms a complex with cognate antitoxin Xre; the 2 toxin molecules dimerize and each contacts an Xre homodimer. Most Res-Xre contacts are between the antitoxin molecule closest to the toxin.

Functionally, toxic component of a type II toxin-antitoxin (TA) system. Expression in E.coli inhibits cell growth. In vivo it is probably neutralized by cognate antitoxin Xre; this has not been shown upon expression in E.coli. Probably depletes intracellular NAD(+). The protein is Toxin Res of Pseudomonas putida (strain ATCC 47054 / DSM 6125 / CFBP 8728 / NCIMB 11950 / KT2440).